The chain runs to 116 residues: Large ribosomal subunit protein bL20 (116 aa).

Belongs to the bacterial ribosomal protein bL20 family.

Binds directly to 23S ribosomal RNA and is necessary for the in vitro assembly process of the 50S ribosomal subunit. It is not involved in the protein synthesizing functions of that subunit. The protein is Large ribosomal subunit protein bL20 of Helicobacter pylori (strain P12).